The chain runs to 674 residues: CRS2-associated factor 1, chloroplastic (674 aa).

A chloroplast-targeting transit peptide spans 1–54; that stretch reads MATARLPSRSFLSPAQQSYPRLPASVRLCLSHHEQPPTGPKRHRRAATSHPAFS. The segment at 31–61 is disordered; that stretch reads SHHEQPPTGPKRHRRAATSHPAFSAAARGRA. Residues 48–57 are compositionally biased toward low complexity; that stretch reads TSHPAFSAAA. 2 CRM domains span residues 183 to 279 and 301 to 397; these read EPLT…TRPC and GGLT…LPPL. The CRS2 binding stretch occupies residues 554 to 576; that stretch reads GLLCLLEQAIHSGRALVLSEDEL.

Interacts with CRS2 and RNA. Part of large ribonucleo-protein complexes that include group IIB introns, CRS2 and CAF1.

Its subcellular location is the plastid. It is found in the chloroplast stroma. Required for the splicing of group IIB introns in chloroplasts. Forms splicing particles with CRS2. Interacts with RNA and confers intron specificity of the splicing particles. This chain is CRS2-associated factor 1, chloroplastic (CAF1), found in Zea mays (Maize).